The following is a 447-amino-acid chain: Tol-Pal system protein TolB (447 aa).

The first 29 residues, 1 to 29, serve as a signal peptide directing secretion; sequence MITMSRIRSLAAFAVFVILGVAAVLPAQA.

Belongs to the TolB family. In terms of assembly, the Tol-Pal system is composed of five core proteins: the inner membrane proteins TolA, TolQ and TolR, the periplasmic protein TolB and the outer membrane protein Pal. They form a network linking the inner and outer membranes and the peptidoglycan layer.

The protein localises to the periplasm. In terms of biological role, part of the Tol-Pal system, which plays a role in outer membrane invagination during cell division and is important for maintaining outer membrane integrity. In Paramagnetospirillum magneticum (strain ATCC 700264 / AMB-1) (Magnetospirillum magneticum), this protein is Tol-Pal system protein TolB.